We begin with the raw amino-acid sequence, 132 residues long: Histone H2A (132 aa).

The segment covering 1 to 10 has biased composition (gly residues); that stretch reads MTGGKSGGKA. The disordered stretch occupies residues 1–24; it reads MTGGKSGGKASGSKNAQSRSSKAG. N6-acetyllysine is present on residues Lys5 and Lys9. Gln106 is modified (N5-methylglutamine). Ser129 carries the phosphoserine modification. Residues 129–130 carry the [ST]-Q motif motif; the sequence is SQ.

The protein belongs to the histone H2A family. The nucleosome is a histone octamer containing two molecules each of H2A, H2B, H3 and H4 assembled in one H3-H4 heterotetramer and two H2A-H2B heterodimers. The octamer wraps approximately 147 bp of DNA. Post-translationally, phosphorylated to form H2AS128ph (gamma-H2A) in response to DNA double-strand breaks (DSBs) generated by exogenous genotoxic agents and by stalled replication forks. Phosphorylation is dependent on the DNA damage checkpoint kinases mec1/ATR and tel1/ATM, spreads on either side of a detected DSB site and may mark the surrounding chromatin for recruitment of proteins required for DNA damage signaling and repair. Gamma-H2A is removed from the DNA prior to the strand invasion-primer extension step of the repair process and subsequently dephosphorylated. Dephosphorylation is necessary for efficient recovery from the DNA damage checkpoint. In terms of processing, acetylated by esa1 to form H2AK4ac and H2AK7ac.

The protein localises to the nucleus. The protein resides in the chromosome. In terms of biological role, core component of nucleosome which plays a central role in DNA double strand break (DSB) repair. Nucleosomes wrap and compact DNA into chromatin, limiting DNA accessibility to the cellular machineries which require DNA as a template. Histones thereby play a central role in transcription regulation, DNA repair, DNA replication and chromosomal stability. DNA accessibility is regulated via a complex set of post-translational modifications of histones, also called histone code, and nucleosome remodeling. The polypeptide is Histone H2A (htaA) (Emericella nidulans (strain FGSC A4 / ATCC 38163 / CBS 112.46 / NRRL 194 / M139) (Aspergillus nidulans)).